Here is a 238-residue protein sequence, read N- to C-terminus: Lipid transferase CIDEC (238 aa).

The tract at residues 1–35 is required for liquid-liquid phase separation (LLPS); that stretch reads MDYAMKSLSLLYPRSLSRHVAVSTAVVTQQLVSEP. Residues 41–118 enclose the CIDE-N domain; the sequence is RARPCRVSTA…VLQKGQKWKS (78 aa).

The protein belongs to the CIDE family. Homodimer. Interacts with CIDEA. Homooligomer; undergoes liquid-liquid phase separation (LLPS) via its N-terminus, facilitating lipid droplet fusion, occurs at the lipid droplet contact sites. Interacts with PLIN1. Interacts with NFAT5; this interaction is direct and retains NFAT5 in the cytoplasm. Interacts with CEBPB. Interacts with isoform CLSTN3beta of CLSTN3; inhibiting the lipid transferase activity of CIDEC. Ubiquitinated and targeted to proteasomal degradation, resulting in a short half-life (about 15 minutes in 3T3-L1 cells). Protein stability depends on triaclyglycerol synthesis, fatty acid availability and lipid droplet formation.

It is found in the lipid droplet. The protein resides in the endoplasmic reticulum. The protein localises to the nucleus. The catalysed reaction is a triacyl-sn-glycerol(in) = a triacyl-sn-glycerol(out). Functionally, lipid transferase specifically expressed in white adipose tissue, which promotes unilocular lipid droplet formation by mediating lipid droplet fusion. Lipid droplet fusion promotes their enlargement, restricting lipolysis and favoring lipid storage. Localizes on the lipid droplet surface, at focal contact sites between lipid droplets, and mediates atypical lipid droplet fusion by undergoing liquid-liquid phase separation (LLPS) and promoting directional net neutral lipid transfer from the smaller to larger lipid droplets. The transfer direction may be driven by the internal pressure difference between the contacting lipid droplet pair. Its role in neutral lipid transfer and lipid droplet enlargement is activated by the interaction with PLIN1. May also act as a CEBPB coactivator in the white adipose tissue to control the expression of a subset of CEBPB downstream target genes, including SOCS1, SOCS3, TGFB1, TGFBR1, ID2 and XDH. When overexpressed in preadipocytes, induces apoptosis or increases cell susceptibility to apoptosis induced by serum deprivation or TGFB treatment. This is Lipid transferase CIDEC from Rattus norvegicus (Rat).